Here is a 477-residue protein sequence, read N- to C-terminus: Cobyric acid synthase (477 aa).

The 185-residue stretch at 248-432 folds into the GATase cobBQ-type domain; that stretch reads GLHIACPMLS…LHGLFSGDGF (185 aa). The Nucleophile role is filled by cysteine 330. Histidine 424 is an active-site residue.

Belongs to the CobB/CobQ family. CobQ subfamily.

Its pathway is cofactor biosynthesis; adenosylcobalamin biosynthesis. Functionally, catalyzes amidations at positions B, D, E, and G on adenosylcobyrinic A,C-diamide. NH(2) groups are provided by glutamine, and one molecule of ATP is hydrogenolyzed for each amidation. This Paracoccus denitrificans (strain Pd 1222) protein is Cobyric acid synthase.